The following is a 469-amino-acid chain: Aspartyl/glutamyl-tRNA(Asn/Gln) amidotransferase subunit B (469 aa).

Belongs to the GatB/GatE family. GatB subfamily. In terms of assembly, heterotrimer of A, B and C subunits.

It catalyses the reaction L-glutamyl-tRNA(Gln) + L-glutamine + ATP + H2O = L-glutaminyl-tRNA(Gln) + L-glutamate + ADP + phosphate + H(+). The enzyme catalyses L-aspartyl-tRNA(Asn) + L-glutamine + ATP + H2O = L-asparaginyl-tRNA(Asn) + L-glutamate + ADP + phosphate + 2 H(+). Allows the formation of correctly charged Asn-tRNA(Asn) or Gln-tRNA(Gln) through the transamidation of misacylated Asp-tRNA(Asn) or Glu-tRNA(Gln) in organisms which lack either or both of asparaginyl-tRNA or glutaminyl-tRNA synthetases. The reaction takes place in the presence of glutamine and ATP through an activated phospho-Asp-tRNA(Asn) or phospho-Glu-tRNA(Gln). The polypeptide is Aspartyl/glutamyl-tRNA(Asn/Gln) amidotransferase subunit B (Methanococcus maripaludis (strain C5 / ATCC BAA-1333)).